The primary structure comprises 1219 residues: Regulator of telomere elongation helicase 1 (1219 aa).

Residues 7 to 296 enclose the Helicase ATP-binding domain; it reads NGVTVDFPFQ…TKAAQQGEPH (290 aa). Position 42–49 (42–49) interacts with ATP; sequence SPTGTGKT. [4Fe-4S] cluster-binding residues include C145, C163, C172, and C207. Positions 151-167 match the Nuclear localization signal motif; it reads KKQESNHLQIHLCRKKV. The short motif at 250 to 253 is the DEAH box element; sequence DEAH. Disordered stretches follow at residues 287-306, 757-786, 839-877, 979-1005, 1017-1054, 1132-1151, and 1159-1219; these read TKAA…SPSP, PAPA…FFST, EHSE…GRKK, RPEH…PDPK, DPQE…RAGK, CTDL…PQEE, and LTHR…EWGL. Residues 757-766 show a composition bias toward low complexity; the sequence is PAPAPRATAP. The span at 863-873 shows a compositional bias: basic and acidic residues; the sequence is SEKRPAEEPRG. The short motif at 871–877 is the Nuclear localization signal element; sequence PRGGRKK. Over residues 1176–1185 the composition is skewed to polar residues; the sequence is KTQSKISSFL. Positions 1178–1185 match the PIP-box motif; it reads QSKISSFL. Low complexity predominate over residues 1200-1219; sequence AGPSQSSGPPHGPAASEWGL.

It belongs to the helicase family. RAD3/XPD subfamily. As to quaternary structure, interacts with TERF1. Interacts (via PIP-box) with PCNA; the interaction is direct and essential for suppressing telomere fragility. Interacts with MMS19; the interaction mediates the association of RTEL1 with the cytosolic iron-sulfur protein assembly (CIA) complex.

The protein resides in the nucleus. The catalysed reaction is ATP + H2O = ADP + phosphate + H(+). Functionally, a probable ATP-dependent DNA helicase implicated in telomere-length regulation, DNA repair and the maintenance of genomic stability. Acts as an anti-recombinase to counteract toxic recombination and limit crossover during meiosis. Regulates meiotic recombination and crossover homeostasis by physically dissociating strand invasion events and thereby promotes noncrossover repair by meiotic synthesis dependent strand annealing (SDSA) as well as disassembly of D loop recombination intermediates. Also disassembles T loops and prevents telomere fragility by counteracting telomeric G4-DNA structures, which together ensure the dynamics and stability of the telomere. The sequence is that of Regulator of telomere elongation helicase 1 from Homo sapiens (Human).